Consider the following 160-residue polypeptide: Troponin C, skeletal muscle (160 aa).

T2 is modified (N-acetylthreonine). 4 EF-hand domains span residues 15 to 50, 51 to 86, 91 to 126, and 127 to 160; these read EMIA…LGQT, PTKE…QMKE, KSEE…SGEH, and VTDE…EGVQ. Ca(2+) is bound by residues D28, D30, D34, E39, D64, D66, S68, T70, E75, D104, N106, D108, Y110, E115, D140, N142, D144, R146, and E151.

Belongs to the troponin C family.

In terms of biological role, troponin is the central regulatory protein of striated muscle contraction. Tn consists of three components: Tn-I which is the inhibitor of actomyosin ATPase, Tn-T which contains the binding site for tropomyosin and Tn-C. The binding of calcium to Tn-C abolishes the inhibitory action of Tn on actin filaments. This is Troponin C, skeletal muscle (TNNC2) from Oryctolagus cuniculus (Rabbit).